The primary structure comprises 73 residues: Ocellatin-PT7 (73 aa).

An N-terminal signal peptide occupies residues 1 to 22; the sequence is MAFLKKSLFLVLFLGLVSLSIC. Residues 23–39 constitute a propeptide that is removed on maturation; the sequence is DEEKRQDEDDDDDDDEE.

Expressed by the skin glands.

Its subcellular location is the secreted. Has antibacterial activity against Gram-negative bacteria E.coli ATCC 25922 (MIC=60 uM) and S.choleraesuis ATCC 14028 (MIC=240 uM) and against Gram-positive bacterium S.aureus ATCC 29313 (MIC=240 uM). Shows no hemolytic activity and no cytotoxicity. This chain is Ocellatin-PT7, found in Leptodactylus pustulatus (Ceara white-lipped frog).